The chain runs to 158 residues: uncharacterized protein (158 aa).

The 98-residue stretch at 13 to 110 (ESVGRALELV…WGDEYLPRPE (98 aa)) folds into the HTH hxlR-type domain.

This is an uncharacterized protein from Mycobacterium tuberculosis (strain CDC 1551 / Oshkosh).